The primary structure comprises 407 residues: Imidazolonepropionase (407 aa).

2 residues coordinate Fe(3+): His-68 and His-70. Residues His-68 and His-70 each contribute to the Zn(2+) site. 4-imidazolone-5-propanoate contacts are provided by Arg-77, Tyr-140, and His-173. Tyr-140 contacts N-formimidoyl-L-glutamate. A Fe(3+)-binding site is contributed by His-238. His-238 lines the Zn(2+) pocket. Gln-241 serves as a coordination point for 4-imidazolone-5-propanoate. Asp-313 serves as a coordination point for Fe(3+). Residue Asp-313 participates in Zn(2+) binding. N-formimidoyl-L-glutamate-binding residues include Asn-315 and Gly-317. Thr-318 is a 4-imidazolone-5-propanoate binding site.

It belongs to the metallo-dependent hydrolases superfamily. HutI family. Requires Zn(2+) as cofactor. Fe(3+) is required as a cofactor.

Its subcellular location is the cytoplasm. It carries out the reaction 4-imidazolone-5-propanoate + H2O = N-formimidoyl-L-glutamate. Its pathway is amino-acid degradation; L-histidine degradation into L-glutamate; N-formimidoyl-L-glutamate from L-histidine: step 3/3. In terms of biological role, catalyzes the hydrolytic cleavage of the carbon-nitrogen bond in imidazolone-5-propanoate to yield N-formimidoyl-L-glutamate. It is the third step in the universal histidine degradation pathway. The polypeptide is Imidazolonepropionase (Burkholderia pseudomallei (strain 668)).